The chain runs to 399 residues: Mitochondrial glycine transporter (399 aa).

Solcar repeat units lie at residues 35 to 137 (IPPY…LRSV), 164 to 251 (LSTT…CKTN), and 266 to 374 (GNWM…GRSW). 6 consecutive transmembrane segments (helical) span residues 41–66 (LAFG…TRLQ), 112–138 (GTAP…RSVA), 170–195 (LLTG…ARFE), 226–249 (GFTA…EACK), 270–296 (VVSA…KTRM), and 349–367 (GLGL…GWSI). Residues 379–399 (EASSSAQEAGTGTRLLDHKQV) form a disordered region.

The protein belongs to the mitochondrial carrier (TC 2.A.29) family. SLC25A38 subfamily.

Its subcellular location is the mitochondrion inner membrane. It catalyses the reaction glycine(in) = glycine(out). Mitochondrial glycine transporter that imports glycine into the mitochondrial matrix. Plays an important role in providing glycine for the first enzymatic step in heme biosynthesis, the condensation of glycine with succinyl-CoA to produce 5-aminolevulinate (ALA) in the mitochondrial matrix. The protein is Mitochondrial glycine transporter of Mycosarcoma maydis (Corn smut fungus).